Reading from the N-terminus, the 2194-residue chain is Supervillin (2194 aa).

The interval 1 to 174 (MKRKERIARR…SSYSRTELSG (174 aa)) is interaction with MYLK. Disordered stretches follow at residues 35-98 (LEED…TQSL), 118-335 (EKYG…QRRH), 388-414 (PESI…KVLE), 450-500 (EDRG…TERM), 513-563 (AVSQ…QTSK), 589-667 (RASR…KVDE), 685-719 (KSFD…QPVT), and 739-791 (HPVM…DSST). Residue Ser50 is modified to Phosphoserine. Residues 87–98 (PYSSGIMDTQSL) are compositionally biased toward polar residues. Composition is skewed to basic and acidic residues over residues 139-161 (SRKD…ESSR) and 181-192 (ESKDYGLHRSDG). Ser245 and Ser262 each carry phosphoserine. 2 stretches are compositionally biased toward basic and acidic residues: residues 283-294 (PKHEWFLQKDSE) and 308-319 (KVREKLVREESA). Polar residues predominate over residues 320–330 (RSSPELTSESL). 2 positions are modified to phosphoserine: Ser321 and Ser322. Positions 455–467 (GRSQEAPSGTEDL) are enriched in polar residues. A compositionally biased stretch (low complexity) spans 540–551 (PPQLQALKAKAP). 2 stretches are compositionally biased toward basic and acidic residues: residues 592 to 615 (RKPE…ERGS) and 626 to 635 (ENRKTSERFR). Phosphoserine is present on residues Ser652 and Ser686. Over residues 704 to 714 (QRLRRLQDRSH) the composition is skewed to basic and acidic residues. Phosphoserine occurs at positions 747 and 781. The segment covering 770–782 (LARDQTNESKDSA) has biased composition (basic and acidic residues). Tyr829 carries the post-translational modification Phosphotyrosine. Thr831 carries the post-translational modification Phosphothreonine. Phosphoserine is present on residues Ser893, Ser899, Ser903, Ser947, Ser979, and Ser1031. A disordered region spans residues 1036 to 1077 (EFGEPTSEQTGAAAGKPAAPTATPVSWKPQDPSEQPQEKRYQ). The span at 1045–1059 (TGAAAGKPAAPTATP) shows a compositional bias: low complexity. Phosphoserine is present on residues Ser1099 and Ser1205. Residue Thr1210 is modified to Phosphothreonine. 3 positions are modified to phosphoserine: Ser1214, Ser1302, and Ser1385. Residues 1399–1667 (SNVSLRSVNL…KFLDWTELKR (269 aa)) are interaction with NEB. 5 Gelsolin-like repeats span residues 1421 to 1520 (KKLM…LGGQ), 1540 to 1662 (IETN…FLDW), 1732 to 1842 (ISVD…FQGG), 1861 to 1962 (WRLY…LGRR), and 1995 to 2102 (ATEF…FPSW). Residues 2131–2194 (KLCKTIYPLA…VNLKKAKGLF (64 aa)) enclose the HP domain.

The protein belongs to the villin/gelsolin family. Associates with F-actin. Interacts with NEB. Interacts with MYH9. Interacts with MYLK. Interacts with TASOR. In terms of assembly, interacts with TRIP6 and DYNLT1. Interacts with KIF14; at midbody during cytokinesis.

The protein resides in the cell membrane. The protein localises to the cytoplasm. It is found in the cytoskeleton. It localises to the cell projection. Its subcellular location is the invadopodium. The protein resides in the podosome. The protein localises to the midbody. It is found in the cleavage furrow. Its function is as follows. Forms a high-affinity link between the actin cytoskeleton and the membrane. Is among the first costameric proteins to assemble during myogenesis and it contributes to myogenic membrane structure and differentiation. Appears to be involved in myosin II assembly. May modulate myosin II regulation through MLCK during cell spreading, an initial step in cell migration. May play a role in invadopodial function. In terms of biological role, may be involved in modulation of focal adhesions. Supervillin-mediated down-regulation of focal adhesions involves binding to TRIP6. Plays a role in cytokinesis through KIF14 interaction. This chain is Supervillin, found in Bos taurus (Bovine).